A 312-amino-acid polypeptide reads, in one-letter code: Ribonuclease Z (312 aa).

Zn(2+)-binding residues include His63, His65, Asp67, His68, His141, Asp212, and His270. The active-site Proton acceptor is the Asp67.

This sequence belongs to the RNase Z family. Homodimer. It depends on Zn(2+) as a cofactor.

The enzyme catalyses Endonucleolytic cleavage of RNA, removing extra 3' nucleotides from tRNA precursor, generating 3' termini of tRNAs. A 3'-hydroxy group is left at the tRNA terminus and a 5'-phosphoryl group is left at the trailer molecule.. Zinc phosphodiesterase, which displays some tRNA 3'-processing endonuclease activity. Probably involved in tRNA maturation, by removing a 3'-trailer from precursor tRNA. The chain is Ribonuclease Z from Latilactobacillus sakei subsp. sakei (strain 23K) (Lactobacillus sakei subsp. sakei).